We begin with the raw amino-acid sequence, 274 residues long: Trehalose transport system permease protein SugB (274 aa).

Transmembrane regions (helical) follow at residues 8–28, 70–90, 102–122, 137–157, 182–202, and 239–259; these read YWAV…LWIF, IGIG…AAYA, LIGA…TPLF, LILP…SAFF, VIVP…FIFA, and GSIA…VLIF. The ABC transmembrane type-1 domain occupies 66–259; the sequence is LINSIGIGLI…IPIIVFVLIF (194 aa).

It belongs to the binding-protein-dependent transport system permease family. In terms of assembly, the complex is composed of two ATP-binding proteins (SugC), two transmembrane proteins (Suga and SugB) and a solute-binding protein (LpqY).

It is found in the cell inner membrane. Functionally, part of the ABC transporter complex LpqY-SugA-SugB-SugC, which is highly specific for uptake of trehalose. Involved in the recycling of extracellular trehalose released from trehalose-containing molecules synthesized by M.tuberculosis. Trehalose uptake is essential for virulence. Probably responsible for the translocation of the substrate across the membrane. This is Trehalose transport system permease protein SugB (sugB) from Mycobacterium tuberculosis (strain CDC 1551 / Oshkosh).